Consider the following 183-residue polypeptide: Photosystem I assembly protein Ycf3 (183 aa).

3 TPR repeats span residues 35-68, 72-105, and 120-153; these read AFIY…EIDS, SYIL…NSFL, and GEQA…SPDN.

Belongs to the Ycf3 family.

The protein localises to the plastid. It is found in the chloroplast thylakoid membrane. Functionally, essential for the assembly of the photosystem I (PSI) complex. May act as a chaperone-like factor to guide the assembly of the PSI subunits. This Adiantum capillus-veneris (Maidenhair fern) protein is Photosystem I assembly protein Ycf3.